The sequence spans 496 residues: Cytochrome f, chloroplastic (496 aa).

Residues 1 to 149 (MASLQTPVMV…VGAAAGSANA (149 aa)) constitute a chloroplast transit peptide. Residues tyrosine 150, cysteine 170, cysteine 173, and histidine 174 each contribute to the heme site. A helical transmembrane segment spans residues 462–481 (VQAFLFFSFTVLATQTLLVV).

It belongs to the cytochrome f family. As to quaternary structure, interacts with plastocyanin and Rieske iron-sulfur protein. It depends on heme as a cofactor.

The protein resides in the plastid. It localises to the chloroplast thylakoid membrane. In terms of biological role, translocates protons across the thylakoid membrane and transfers electrons from photosystem II to photosystem I. It receives electrons from the Rieske iron-sulfur protein and passes them to plastocyanin. The polypeptide is Cytochrome f, chloroplastic (petA) (Euglena gracilis).